The chain runs to 554 residues: Glypican-1 (554 aa).

The signal sequence occupies residues 1–21; it reads MERLCWGWWWHLGILCLMHWA. Intrachain disulfides connect Cys-32–Cys-68, Cys-62–Cys-256, Cys-69–Cys-259, Cys-191–Cys-343, Cys-246–Cys-279, Cys-268–Cys-415, and Cys-272–Cys-401. 2 N-linked (GlcNAc...) asparagine glycosylation sites follow: Asn-79 and Asn-116. A disordered region spans residues 346 to 369; sequence PKKTNKGSKSEERRRKGKATQEDK. Residues 353–369 show a composition bias toward basic and acidic residues; the sequence is SKSEERRRKGKATQEDK. 3 O-linked (Xyl...) (heparan sulfate) serine glycosylation sites follow: Ser-486, Ser-488, and Ser-490.

It belongs to the glypican family. In terms of processing, O-glycosylated with heparan sulfate side chains.

The protein localises to the cell membrane. Its subcellular location is the secreted. It is found in the extracellular space. Its function is as follows. Cell surface proteoglycan that bears heparan sulfate. In Xenopus tropicalis (Western clawed frog), this protein is Glypican-1 (gpc1).